The sequence spans 372 residues: MAATSDIVEKTHILQKYLELDQRGAIIAEYVWIDSEGGLRSKGRTLNKKVTSVDSLPEWNFDGSSTGQAPGHDSDIYLKPVAFYPDPFRRGDNIVVLAECWNNDGTPNKFNHRHEAAKLFEAHKDAEMWFGLEQEYTLFDQYDQVYGWPKGGFPAPQGPYYCGVGAGKVFARDVIEAHYRACLYAGVNISGINAEVMPSQWEFQVGPCEGIAMADQLWIARYFLHRVAEEFGVKVSLHPKPLKGDWNGAGCHTNVSTKLMRAPGGMKYIEDAIEKLSKRHNEHIKLYGADNEQRLTGRHETASMSTFSSGVANRGASIRIPRSVNKEGYGYFEDRRPASNIDPYLVTGIMCETVCGAIENANMTKEYERESL.

The 80-residue stretch at 26–105 (IIAEYVWIDS…VLAECWNNDG (80 aa)) folds into the GS beta-grasp domain. The GS catalytic domain maps to 112 to 372 (HRHEAAKLFE…MTKEYERESL (261 aa)).

It belongs to the glutamine synthetase family. In terms of assembly, homooctamer.

It localises to the cytoplasm. The enzyme catalyses L-glutamate + NH4(+) + ATP = L-glutamine + ADP + phosphate + H(+). This Kluyveromyces lactis (strain ATCC 8585 / CBS 2359 / DSM 70799 / NBRC 1267 / NRRL Y-1140 / WM37) (Yeast) protein is Glutamine synthetase (GLN1).